We begin with the raw amino-acid sequence, 381 residues long: MALDKRIWMHFDLLPFVFIIPLLVVSFLLIFESSAVLSLKQGVYYAIGFILFWIVFFIPFRKLGRWLFVFYWACVILLALVDFMGYSKLGAQRWLVIPFISITLQPSEPVKIAILLLLAHLIKINPPPFKGYDWGMFLKLSFYICLPAALILKQPDLGTALIVLIMGFGILLIVGLRTRVWLPLFIALLVASPIAYHFLHDYQKKRIADFLSEKPNYHVMQSIIAIGSGGFLGKSKEACTQTKFKFLPIATSDFIFAYFVERFGFLGAMLLFAIYIGLSLHLFFYLFESNSDWFLKIVALGISILIFVYSSVNIAMTLGLAPVVGIPLPLFSYGGSSFITFMILFGILENLLAFRYIFGYNSKPSFGNFGFLAQLVRALGS.

10 helical membrane-spanning segments follow: residues 11-31 (FDLLPFVFIIPLLVVSFLLIF), 40-60 (KQGVYYAIGFILFWIVFFIPF), 66-86 (WLFVFYWACVILLALVDFMGY), 99-119 (FISITLQPSEPVKIAILLLLA), 132-152 (YDWGMFLKLSFYICLPAALIL), 156-176 (DLGTALIVLIMGFGILLIVGL), 180-200 (VWLPLFIALLVASPIAYHFLH), 263-283 (FGFLGAMLLFAIYIGLSLHLF), 297-317 (IVALGISILIFVYSSVNIAMT), and 328-348 (LPLFSYGGSSFITFMILFGIL).

This sequence belongs to the SEDS family. MrdB/RodA subfamily.

The protein localises to the cell inner membrane. It carries out the reaction [GlcNAc-(1-&gt;4)-Mur2Ac(oyl-L-Ala-gamma-D-Glu-L-Lys-D-Ala-D-Ala)](n)-di-trans,octa-cis-undecaprenyl diphosphate + beta-D-GlcNAc-(1-&gt;4)-Mur2Ac(oyl-L-Ala-gamma-D-Glu-L-Lys-D-Ala-D-Ala)-di-trans,octa-cis-undecaprenyl diphosphate = [GlcNAc-(1-&gt;4)-Mur2Ac(oyl-L-Ala-gamma-D-Glu-L-Lys-D-Ala-D-Ala)](n+1)-di-trans,octa-cis-undecaprenyl diphosphate + di-trans,octa-cis-undecaprenyl diphosphate + H(+). Its pathway is cell wall biogenesis; peptidoglycan biosynthesis. Peptidoglycan polymerase that is essential for cell wall elongation. This Helicobacter pylori (strain ATCC 700392 / 26695) (Campylobacter pylori) protein is Peptidoglycan glycosyltransferase MrdB.